We begin with the raw amino-acid sequence, 450 residues long: Eukaryotic translation initiation factor 3 subunit E (450 aa).

Positions 255 to 424 (TELFFSPAYI…GTVIMNHPPQ (170 aa)) constitute a PCI domain.

The protein belongs to the eIF-3 subunit E family. Component of the eukaryotic translation initiation factor 3 (eIF-3) complex.

It localises to the cytoplasm. Component of the eukaryotic translation initiation factor 3 (eIF-3) complex, which is involved in protein synthesis of a specialized repertoire of mRNAs and, together with other initiation factors, stimulates binding of mRNA and methionyl-tRNAi to the 40S ribosome. The eIF-3 complex specifically targets and initiates translation of a subset of mRNAs involved in cell proliferation. The chain is Eukaryotic translation initiation factor 3 subunit E (int6) from Aspergillus clavatus (strain ATCC 1007 / CBS 513.65 / DSM 816 / NCTC 3887 / NRRL 1 / QM 1276 / 107).